Here is a 256-residue protein sequence, read N- to C-terminus: Trans-aconitate 2-methyltransferase (256 aa).

Belongs to the methyltransferase superfamily. Tam family.

The protein resides in the cytoplasm. The enzyme catalyses trans-aconitate + S-adenosyl-L-methionine = (E)-3-(methoxycarbonyl)pent-2-enedioate + S-adenosyl-L-homocysteine. Functionally, catalyzes the S-adenosylmethionine monomethyl esterification of trans-aconitate. This chain is Trans-aconitate 2-methyltransferase, found in Afipia carboxidovorans (strain ATCC 49405 / DSM 1227 / KCTC 32145 / OM5) (Oligotropha carboxidovorans).